Reading from the N-terminus, the 700-residue chain is ATP-dependent zinc metalloprotease FtsH (700 aa).

Residues methionine 1–arginine 10 lie on the Cytoplasmic side of the membrane. The helical transmembrane segment at serine 11–glycine 31 threads the bilayer. The Extracellular portion of the chain corresponds to asparagine 32 to glycine 130. The chain crosses the membrane as a helical span at residues phenylalanine 131 to leucine 151. Over methionine 152 to lysine 700 the chain is Cytoplasmic. Glycine 227–threonine 234 is an ATP binding site. Histidine 449 is a Zn(2+) binding site. Glutamate 450 is an active-site residue. Zn(2+) contacts are provided by histidine 453 and aspartate 525. The disordered stretch occupies residues lysine 644 to lysine 700.

It in the central section; belongs to the AAA ATPase family. In the C-terminal section; belongs to the peptidase M41 family. Homohexamer. Zn(2+) serves as cofactor.

It is found in the cell membrane. Its function is as follows. Acts as a processive, ATP-dependent zinc metallopeptidase for both cytoplasmic and membrane proteins. Plays a role in the quality control of integral membrane proteins. This Leuconostoc mesenteroides subsp. mesenteroides (strain ATCC 8293 / DSM 20343 / BCRC 11652 / CCM 1803 / JCM 6124 / NCDO 523 / NBRC 100496 / NCIMB 8023 / NCTC 12954 / NRRL B-1118 / 37Y) protein is ATP-dependent zinc metalloprotease FtsH.